We begin with the raw amino-acid sequence, 254 residues long: MEIDLNADLGEGCGSDEALLDLVTSANIACGWHAGGAPAMRDCVRWAVEKGVSIGAHPSFHDPENFGRKEMDLPASEIYAGVLYQLGALSAIAQAEGGRIAHVKPHGALYNQAARDAEIADAVVSAIHDFDPSLAVFGLASSGFVDAARHAGLVAVEEVFADRGYRADGSLVPRSQPGALVDDEREMLARTLEMVRGQRVRAVTGEWVPLNAQTVCLHGDGPHALAFAKRIREALEAAGIDVHAPGALHAGERA.

It belongs to the LamB/PxpA family. As to quaternary structure, forms a complex composed of PxpA, PxpB and PxpC.

The enzyme catalyses 5-oxo-L-proline + ATP + 2 H2O = L-glutamate + ADP + phosphate + H(+). Its function is as follows. Catalyzes the cleavage of 5-oxoproline to form L-glutamate coupled to the hydrolysis of ATP to ADP and inorganic phosphate. In Burkholderia thailandensis (strain ATCC 700388 / DSM 13276 / CCUG 48851 / CIP 106301 / E264), this protein is 5-oxoprolinase subunit A.